The chain runs to 174 residues: Ribosome rescue factor SmrB (174 aa).

The Smr domain occupies 96-171 (LDLHGMNQQQ…GDSAILVLLD (76 aa)).

This sequence belongs to the SmrB family. In terms of assembly, associates with collided ribosomes, but not with correctly translating polysomes.

Acts as a ribosome collision sensor. Detects stalled/collided disomes (pairs of ribosomes where the leading ribosome is stalled and a second ribosome has collided with it) and endonucleolytically cleaves mRNA at the 5' boundary of the stalled ribosome. Stalled/collided disomes form a new interface (primarily via the 30S subunits) that binds SmrB. Cleaved mRNA becomes available for tmRNA ligation, leading to ribosomal subunit dissociation and rescue of stalled ribosomes. In Aeromonas hydrophila subsp. hydrophila (strain ATCC 7966 / DSM 30187 / BCRC 13018 / CCUG 14551 / JCM 1027 / KCTC 2358 / NCIMB 9240 / NCTC 8049), this protein is Ribosome rescue factor SmrB.